Here is a 261-residue protein sequence, read N- to C-terminus: MRLCFILFLLLSPLISEASQHIITVKTIHEIASDILYDDANYWLIFDIDDVLFEGAEALSHSAWFERSIQGMRALGTSEQEAWDTLYPDWLSIQRQGSIKQIETAIPLLITKVQNQNKIVFAYSERKVCAQDVTLEQLAKINLSFEKANLPYTSLPSNICFTKGVLFGSEIHKGPGLQRFLDAQPSLPEKVIYIDNEKYNVLRIGEVCKQKNIPYLGIVYTASKYHPPIYLPDIARIQYLYRQKLISNEAAALLSRHRLDK.

Positions 1–18 (MRLCFILFLLLSPLISEA) are cleaved as a signal peptide.

It localises to the cell outer membrane. The sequence is that of Putative outer membrane protein CT_371 from Chlamydia trachomatis serovar D (strain ATCC VR-885 / DSM 19411 / UW-3/Cx).